The sequence spans 399 residues: L-asparaginase-like protein GG20738 (399 aa).

The signal sequence occupies residues 1-22; the sequence is MLAQSCCLRLLILLLLCKSTCS. Disulfide bonds link Cys-90–Cys-95, Cys-189–Cys-205, and Cys-344–Cys-371.

Belongs to the Ntn-hydrolase family.

This chain is L-asparaginase-like protein GG20738, found in Drosophila erecta (Fruit fly).